The following is a 562-amino-acid chain: NAD-dependent malic enzyme (562 aa).

Catalysis depends on Y101, which acts as the Proton donor. R154 serves as a coordination point for NAD(+). The active-site Proton acceptor is the K172. E243, D244, and D267 together coordinate a divalent metal cation. Positions 267 and 415 each coordinate NAD(+).

This sequence belongs to the malic enzymes family. As to quaternary structure, homotetramer. It depends on Mg(2+) as a cofactor. Requires Mn(2+) as cofactor.

It carries out the reaction (S)-malate + NAD(+) = pyruvate + CO2 + NADH. It catalyses the reaction oxaloacetate + H(+) = pyruvate + CO2. The chain is NAD-dependent malic enzyme from Shewanella loihica (strain ATCC BAA-1088 / PV-4).